We begin with the raw amino-acid sequence, 642 residues long: Threonine--tRNA ligase (642 aa).

The TGS domain occupies 1-61 (MPVITLPDGS…ENDAQLSIIT (61 aa)). Residues 243-534 (DHRKIGKQLD…LTEEFAGFFP (292 aa)) are catalytic. The residue at position 286 (Lys286) is an N6-acetyllysine. The Zn(2+) site is built by Cys334, His385, and His511.

This sequence belongs to the class-II aminoacyl-tRNA synthetase family. In terms of assembly, homodimer. Zn(2+) is required as a cofactor.

The protein resides in the cytoplasm. The enzyme catalyses tRNA(Thr) + L-threonine + ATP = L-threonyl-tRNA(Thr) + AMP + diphosphate + H(+). Catalyzes the attachment of threonine to tRNA(Thr) in a two-step reaction: L-threonine is first activated by ATP to form Thr-AMP and then transferred to the acceptor end of tRNA(Thr). Also edits incorrectly charged L-seryl-tRNA(Thr). The polypeptide is Threonine--tRNA ligase (Escherichia coli O9:H4 (strain HS)).